The chain runs to 403 residues: Enoyl-[acyl-carrier-protein] reductase [NADH] (403 aa).

Residues 49–54 (GASSGY), 75–76 (FE), 112–113 (DA), and 141–142 (LA) each bind NAD(+). Tyrosine 227 contacts substrate. Catalysis depends on tyrosine 237, which acts as the Proton donor. Residues lysine 246 and 276–278 (VVT) contribute to the NAD(+) site.

The protein belongs to the TER reductase family. In terms of assembly, monomer.

The enzyme catalyses a 2,3-saturated acyl-[ACP] + NAD(+) = a (2E)-enoyl-[ACP] + NADH + H(+). The protein operates within lipid metabolism; fatty acid biosynthesis. Involved in the final reduction of the elongation cycle of fatty acid synthesis (FAS II). Catalyzes the reduction of a carbon-carbon double bond in an enoyl moiety that is covalently linked to an acyl carrier protein (ACP). The polypeptide is Enoyl-[acyl-carrier-protein] reductase [NADH] (Pseudomonas putida (strain GB-1)).